Consider the following 197-residue polypeptide: Na(+)-translocating NADH-quinone reductase subunit E (197 aa).

6 consecutive transmembrane segments (helical) span residues 11 to 31 (SVFI…FLAV), 35 to 55 (VSTA…SVPA), 76 to 96 (FLKF…LEMF), 108 to 128 (LGIY…VSFM), 139 to 159 (VVYG…LAGI), and 175 to 195 (LGIT…FSGI).

This sequence belongs to the NqrDE/RnfAE family. In terms of assembly, composed of six subunits; NqrA, NqrB, NqrC, NqrD, NqrE and NqrF.

It localises to the cell inner membrane. It carries out the reaction a ubiquinone + n Na(+)(in) + NADH + H(+) = a ubiquinol + n Na(+)(out) + NAD(+). In terms of biological role, NQR complex catalyzes the reduction of ubiquinone-1 to ubiquinol by two successive reactions, coupled with the transport of Na(+) ions from the cytoplasm to the periplasm. NqrA to NqrE are probably involved in the second step, the conversion of ubisemiquinone to ubiquinol. This Neisseria gonorrhoeae (strain ATCC 700825 / FA 1090) protein is Na(+)-translocating NADH-quinone reductase subunit E.